The following is a 460-amino-acid chain: MSESVAIIGAGLVGCLAALAFSKEGYNVTLYDFRQDPRLDTTKNKNLKSINLAISARGIDALKSIDPDACEHILQDMIPMKGRMIHDLKGRQESQLYGLHGEAINSINRSVLNNSLLDELEKSTTELKFGHKLVKIEWTDDKQICHFAIGEDLKTPHTEKYDFVIGCDGAYSATRSQMQRKVEMDFSQEYMNLRYIELYIPPTEEFKPNYGGNFAIAPDHLHIWPRHKFMLIALANSDGSFTSTFFGSKDQISDLITSKSRVREFLIENFPDIINIMDLDDAVKRFITYPKESLVCVNCKPYDVPGGKAILLGDAAHAMVPFYGQGMNCGFEDVRILMALLKKHSGDRSRAFTEYTQTRHKDLVSITELAKRNYKEMSHDVTSKRFLLRKKLDALFSIIMKDKWIPLYTMISFRSDISYSRALERAGKQTRILKFLESLTLGMLSIGGYKLFKFLTRERS.

Residues Val-13, 32–34 (DFR), and Ala-53 each bind FAD. Residues Arg-83 and Tyr-97 each coordinate L-kynurenine. FAD-binding positions include Arg-109, Leu-133, Tyr-195, Asp-314, and 325-328 (QGMN). Residues Asn-373 and Tyr-408 each coordinate L-kynurenine.

It belongs to the aromatic-ring hydroxylase family. KMO subfamily. FAD is required as a cofactor.

Its subcellular location is the mitochondrion outer membrane. It carries out the reaction L-kynurenine + NADPH + O2 + H(+) = 3-hydroxy-L-kynurenine + NADP(+) + H2O. It functions in the pathway cofactor biosynthesis; NAD(+) biosynthesis; quinolinate from L-kynurenine: step 1/3. Its function is as follows. Catalyzes the hydroxylation of L-kynurenine (L-Kyn) to form 3-hydroxy-L-kynurenine (L-3OHKyn). Required for synthesis of quinolinic acid. This chain is Kynurenine 3-monooxygenase, found in Saccharomyces cerevisiae (strain ATCC 204508 / S288c) (Baker's yeast).